The following is a 312-amino-acid chain: Pantothenate kinase (312 aa).

97-104 lines the ATP pocket; sequence GSVAVGKS.

Belongs to the prokaryotic pantothenate kinase family.

It is found in the cytoplasm. It carries out the reaction (R)-pantothenate + ATP = (R)-4'-phosphopantothenate + ADP + H(+). Its pathway is cofactor biosynthesis; coenzyme A biosynthesis; CoA from (R)-pantothenate: step 1/5. This Mycolicibacterium vanbaalenii (strain DSM 7251 / JCM 13017 / BCRC 16820 / KCTC 9966 / NRRL B-24157 / PYR-1) (Mycobacterium vanbaalenii) protein is Pantothenate kinase.